Here is a 284-residue protein sequence, read N- to C-terminus: IGKAHGGVSVSGGVGERTREGNXLYMEMKESKVINEQNISESKVALVYGQMNEPPGARMRVGLTALTMAEYFRDVNKQDVLLFIDNIFRFVQAGSEVSALLGRMPSAVGYQPTLGTEMGSLQERITSTKEGSITSIQAVYVPADDLTDPAPATTSAHLDATTVLSRGLAAKGIYPAVDPLDSTSTMLQPWIVGEEHYDTAQGVKQTLQRYKELQDIIAILGLDELSEEDRLTVARARKIERFLSQPFFVAEVFTGSPGKYVRLSETIKGFQMILSGELDXLPEQ.

It belongs to the ATPase alpha/beta chains family. F-type ATPases have 2 components, CF(1) - the catalytic core - and CF(0) - the membrane proton channel. CF(1) has five subunits: alpha(3), beta(3), gamma(1), delta(1), epsilon(1). CF(0) has four main subunits: a(1), b(1), b'(1) and c(9-12).

It localises to the plastid. Its subcellular location is the chloroplast thylakoid membrane. It catalyses the reaction ATP + H2O + 4 H(+)(in) = ADP + phosphate + 5 H(+)(out). Produces ATP from ADP in the presence of a proton gradient across the membrane. The catalytic sites are hosted primarily by the beta subunits. The sequence is that of ATP synthase subunit beta, chloroplastic (atpB) from Asplenium nidus (Bird's nest fern).